The sequence spans 204 residues: Small ribosomal subunit protein uS4 (204 aa).

One can recognise an S4 RNA-binding domain in the interval 93 to 156 (SRLSSVLYHS…AKIPVIVEAV (64 aa)).

Belongs to the universal ribosomal protein uS4 family. As to quaternary structure, part of the 30S ribosomal subunit. Contacts protein S5. The interaction surface between S4 and S5 is involved in control of translational fidelity.

Its function is as follows. One of the primary rRNA binding proteins, it binds directly to 16S rRNA where it nucleates assembly of the body of the 30S subunit. With S5 and S12 plays an important role in translational accuracy. The polypeptide is Small ribosomal subunit protein uS4 (Wolbachia sp. subsp. Brugia malayi (strain TRS)).